The sequence spans 111 residues: MGSSSFLVLMVSLALVTLVAAEGVKVNIEKPGVCPADNIRCIKSDPPQCHTDQDCQGIRKCCYLHCGFKCVIPVKELEEGGNKDEDVSRPCPEPGWEAKPPGVFSTRCPQK.

A signal peptide spans 1–23; that stretch reads MGSSSFLVLMVSLALVTLVAAEG. Residues 27–74 enclose the WAP domain; sequence NIEKPGVCPADNIRCIKSDPPQCHTDQDCQGIRKCCYLHCGFKCVIPV. 4 cysteine pairs are disulfide-bonded: Cys-34-Cys-62, Cys-41-Cys-66, Cys-49-Cys-61, and Cys-55-Cys-70. The tract at residues 80-111 is disordered; sequence GGNKDEDVSRPCPEPGWEAKPPGVFSTRCPQK.

It is found in the secreted. In terms of biological role, antibacterial protein. Putative acid-stable proteinase inhibitor. The protein is WAP four-disulfide core domain protein 12 (WFDC12) of Callithrix jacchus (White-tufted-ear marmoset).